Reading from the N-terminus, the 315-residue chain is Methionyl-tRNA formyltransferase (315 aa).

117-120 is a (6S)-5,6,7,8-tetrahydrofolate binding site; sequence SLLP.

Belongs to the Fmt family.

It carries out the reaction L-methionyl-tRNA(fMet) + (6R)-10-formyltetrahydrofolate = N-formyl-L-methionyl-tRNA(fMet) + (6S)-5,6,7,8-tetrahydrofolate + H(+). Its function is as follows. Attaches a formyl group to the free amino group of methionyl-tRNA(fMet). The formyl group appears to play a dual role in the initiator identity of N-formylmethionyl-tRNA by promoting its recognition by IF2 and preventing the misappropriation of this tRNA by the elongation apparatus. The chain is Methionyl-tRNA formyltransferase from Methylibium petroleiphilum (strain ATCC BAA-1232 / LMG 22953 / PM1).